Here is a 205-residue protein sequence, read N- to C-terminus: Rho-related GTP-binding protein RhoQ (205 aa).

16-23 (GDGAVGKT) provides a ligand contact to GTP. An Effector region motif is present at residues 38–46 (YVPTVFDHY). GTP-binding positions include 63–67 (DTAGQ) and 121–124 (TQID). Cysteine 202 is modified (cysteine methyl ester). Cysteine 202 carries S-farnesyl cysteine lipidation. Positions 203-205 (LIT) are cleaved as a propeptide — removed in mature form.

Belongs to the small GTPase superfamily. Rho family. As to quaternary structure, interacts with CDC42EP4 in a GTP-dependent manner. Interacts with ARHGAP33/TCGAP. Interacts with CDC42EP1, CDC42EP2, CDC42EP3, PARD6A, PARD6G (and probably PARD6B) in a GTP-dependent manner. Part of a quaternary complex containing PARD3, some PARD6 protein (PARD6A, PARD6B or PARD6G) and some atypical PKC protein (PRKCI or PRKCZ). Interacts with EXO70 in a GTP-dependent manner. Interacts with GOPC. May be post-translationally modified by both palmitoylation and polyisoprenylation.

The protein localises to the cytoplasm. It is found in the cell membrane. Regulated by guanine nucleotide exchange factors (GEFs) which promote the exchange of bound GDP for free GTP, GTPase activating proteins (GAPs) which increase the GTP hydrolysis activity, and GDP dissociation inhibitors which inhibit the dissociation of the nucleotide from the GTPase. Plasma membrane-associated small GTPase which cycles between an active GTP-bound and an inactive GDP-bound state. In active state binds to a variety of effector proteins to regulate cellular responses. Involved in epithelial cell polarization processes. May play a role in CFTR trafficking to the plasma membrane. Causes the formation of thin, actin-rich surface projections called filopodia. This is Rho-related GTP-binding protein RhoQ (RHOQ) from Homo sapiens (Human).